The sequence spans 531 residues: Protein tweety homolog 2-like (531 aa).

Topologically, residues 1–44 are extracellular; the sequence is MASSRQDYIAPWWTYWLHNFPHLNFNFQTVDNTFKPEDASYQQS. Residues 45 to 65 traverse the membrane as a helical segment; that stretch reads LVFLACVSAVALGLCLLLLSV. Residues 66–87 are Cytoplasmic-facing; that stretch reads YLTCLCCCRREEDEEVKRPDTC. Residues 88-108 form a helical membrane-spanning segment; the sequence is CVTWAAVITGLVICSAVGVGF. Residues 109 to 213 lie on the Extracellular side of the membrane; sequence YGNSETNDGV…RTAFIEYYRW (105 aa). A glycan (N-linked (GlcNAc...) asparagine) is linked at asparagine 129. The chain crosses the membrane as a helical span at residues 214–234; that stretch reads LTYLLLLILDLVICLLACLAL. Residues 235 to 239 are Cytoplasmic-facing; it reads AKQSR. Residues 240–260 form a helical membrane-spanning segment; it reads WLLTVIMVCGMLTLIMSWASL. At 261 to 389 the chain is on the extracellular side; that stretch reads GAGTATAVGT…GVCYDGVEGL (129 aa). Residues asparagine 283 and asparagine 352 are each glycosylated (N-linked (GlcNAc...) asparagine). Residues 390-410 traverse the membrane as a helical segment; the sequence is LYLCLFSLLAACAFCALLCAV. Residues 411–531 lie on the Cytoplasmic side of the membrane; the sequence is PRAWMLIAIR…IRHFGTDFQV (121 aa).

It belongs to the tweety family.

It localises to the cell membrane. Functionally, probable large-conductance Ca(2+)-activated chloride channel. This Danio rerio (Zebrafish) protein is Protein tweety homolog 2-like (ttyh2l).